The chain runs to 265 residues: Glutamate racemase (265 aa).

Substrate-binding positions include 12–13 (DS) and 44–45 (YG). Cysteine 75 acts as the Proton donor/acceptor in catalysis. Residue 76 to 77 (NT) coordinates substrate. Cysteine 186 functions as the Proton donor/acceptor in the catalytic mechanism. 187-188 (TH) provides a ligand contact to substrate.

Belongs to the aspartate/glutamate racemases family.

The enzyme catalyses L-glutamate = D-glutamate. It functions in the pathway cell wall biogenesis; peptidoglycan biosynthesis. Its function is as follows. Provides the (R)-glutamate required for cell wall biosynthesis. In Pseudomonas putida (strain ATCC 47054 / DSM 6125 / CFBP 8728 / NCIMB 11950 / KT2440), this protein is Glutamate racemase.